Reading from the N-terminus, the 161-residue chain is Nucleotide-binding protein XOO0647 (161 aa).

Belongs to the YajQ family.

Nucleotide-binding protein. This chain is Nucleotide-binding protein XOO0647, found in Xanthomonas oryzae pv. oryzae (strain MAFF 311018).